A 159-amino-acid polypeptide reads, in one-letter code: Phosphopantetheine adenylyltransferase (159 aa).

Thr10 contacts substrate. Residues 10 to 11 and His18 each bind ATP; that span reads TF. 3 residues coordinate substrate: Lys42, Met74, and Arg88. ATP contacts are provided by residues 89 to 91, Glu99, and 124 to 130; these read GLR and WSFISSS.

The protein belongs to the bacterial CoaD family. In terms of assembly, homohexamer. It depends on Mg(2+) as a cofactor.

The protein resides in the cytoplasm. The enzyme catalyses (R)-4'-phosphopantetheine + ATP + H(+) = 3'-dephospho-CoA + diphosphate. Its pathway is cofactor biosynthesis; coenzyme A biosynthesis; CoA from (R)-pantothenate: step 4/5. Functionally, reversibly transfers an adenylyl group from ATP to 4'-phosphopantetheine, yielding dephospho-CoA (dPCoA) and pyrophosphate. The chain is Phosphopantetheine adenylyltransferase from Salmonella typhimurium (strain LT2 / SGSC1412 / ATCC 700720).